The primary structure comprises 353 residues: Protein MGF 360-10L (353 aa).

An ANK repeat occupies 57–89; it reads DLNTALMLATKENNYQLIKLFTEWGADINYGLI. The N-linked (GlcNAc...) asparagine; by host glycan is linked to Asn172. A run of 2 helical transmembrane segments spans residues 206–228 and 249–271; these read LNTW…NLYE and NFLT…IASI. Residue Asn342 is glycosylated (N-linked (GlcNAc...) asparagine; by host).

The protein belongs to the asfivirus MGF 360 family.

It is found in the host membrane. In terms of biological role, plays a role in virus cell tropism, and may be required for efficient virus replication in macrophages. This chain is Protein MGF 360-10L, found in African swine fever virus (isolate Warthog/Namibia/Wart80/1980) (ASFV).